The following is a 402-amino-acid chain: Peptidyl-prolyl cis-trans isomerase FKBP8 (402 aa).

Over residues Asp28–Leu39 the composition is skewed to acidic residues. The segment at Asp28–Glu54 is disordered. The region spanning Gly110–Glu194 is the PPIase FKBP-type domain. One copy of the TPR 1 repeat lies at Ala211 to Asn244. Residues Lys239, Lys261, Lys263, and Lys274 each participate in a glycyl lysine isopeptide (Lys-Gly) (interchain with G-Cter in ubiquitin) cross-link. 2 TPR repeats span residues Val262–Asn295 and Ile296–Asn329. Ser286 is subject to Phosphoserine. Residues Lys297, Lys304, Lys324, Lys330, Lys338, Lys341, and Lys342 each participate in a glycyl lysine isopeptide (Lys-Gly) (interchain with G-Cter in ubiquitin) cross-link. A helical transmembrane segment spans residues Trp380–Ala400.

As to quaternary structure, homomultimers or heteromultimers (Potential). Forms heterodimer with calmodulin. When activated by calmodulin and calcium, interacts with the BH4 domain of BCL2 and weakly with BCLX isoform Bcl-X(L). Does not bind and inhibit calcineurin. Interacts with ZFYVE27; may negatively regulate ZFYVE27 phosphorylation. Ca(2+) is required as a cofactor. Ubiquitinated by PRKN during mitophagy, leading to its degradation and enhancement of mitophagy. Deubiquitinated by USP30. Detected throughout the embryonic body, in caudal neural tube, limbs and head. Detected in adult retina, brain, heart, kidney, liver, pancreas, lung, testis and urinary bladder (at protein level). Detected in adult brain, kidney, liver, testis and trigeminal nerve, and in embryo. Detected at lower levels in lung, spleen, heart and ovary. Widely expressed in forebrain. Detected in the Purkinje cell layer in the cerebellum and in hippocampus neurons.

The protein resides in the mitochondrion membrane. The enzyme catalyses [protein]-peptidylproline (omega=180) = [protein]-peptidylproline (omega=0). In terms of biological role, constitutively inactive PPiase, which becomes active when bound to calmodulin and calcium. Seems to act as a chaperone for BCL2, targets it to the mitochondria and modulates its phosphorylation state. The BCL2/FKBP8/calmodulin/calcium complex probably interferes with the binding of BCL2 to its targets. The active form of FKBP8 may therefore play a role in the regulation of apoptosis. Required for normal embryonic development. The chain is Peptidyl-prolyl cis-trans isomerase FKBP8 (Fkbp8) from Mus musculus (Mouse).